Reading from the N-terminus, the 303-residue chain is tRNA dimethylallyltransferase 1 (303 aa).

Gly9 to Thr16 contacts ATP. Substrate is bound at residue Thr11–Thr16. Interaction with substrate tRNA regions lie at residues Asp34–Leu37, Gln158–Arg162, and Arg239–Arg244.

Belongs to the IPP transferase family. As to quaternary structure, monomer. Mg(2+) serves as cofactor.

It catalyses the reaction adenosine(37) in tRNA + dimethylallyl diphosphate = N(6)-dimethylallyladenosine(37) in tRNA + diphosphate. Functionally, catalyzes the transfer of a dimethylallyl group onto the adenine at position 37 in tRNAs that read codons beginning with uridine, leading to the formation of N6-(dimethylallyl)adenosine (i(6)A). This is tRNA dimethylallyltransferase 1 from Shewanella sediminis (strain HAW-EB3).